The following is a 975-amino-acid chain: MTIQVLFATEYDSANIVISLLCGVEVDHDLYPILYKRINYNNGASNNDGSRSGAINFDDRVNDEDSRLNAPVDDTIEFCLQTQSCEDSIRIRPVFYCHAHALNFETRYRTHEVLGSATLLQCLDESRTLTMYRRILSEIITEPSSASEKRNPAPTNLRHLVYFHRDVLVKYLTENFIMPTSPAWFISVFGSYEASLVLTMHYYLLERQYSTVQTTQHYAKCFTGDMGKPLVSCYSMKDFMIMIQSSAFLGKTAKFTHYCKLKNDRDLQELMAIDASINAFRQNVCLTEAEHVHFMYLAFGTALAKTKFLDYTLKTSLLSNNDDQTNNCNDYIVDNCAVDNHCQNDIDEIIIPRSSTNRTFAISEVSYDRSNSTSSSGVYSMDSCDESRGSEDSAMCSLYESRYLSHNLKKELLNIMELYFTPTSYLNIYVKVHKHESKSPLFEGYSIDTCSEKGTVFSGTSTSMADRLRKGNKMFEGLFEETDSEGVSSVLNIIASNRHAILPRCEDDDSCGKSTSGMPNRICKREIVFPGLTRPAPMYRTDGFNNMQICRYFSVVSKENWFSNSNLTDVLNMVPDEYVSDERLTESVWVPDVKVSSPRLSEQLYRSRHEMFNDRLPVYNFVGDVDLKVTGPVSKDWMFSFCRTLRRIILETFEHLFEKIDHGEHPVYFFKSGCEPENGSFCACSEKIGLRVITPFPRNTCILGGKTMKHLCEIINHILFLDKEMFSLVNVTVVDKNCFDYGIYSHGKSVRLPMMSKVDENLGFLQNRLLPLFIVPDSYRHGGRHKVFVRDQLNISNWLHHNASGTAYDPCKTISYVLSIDDVGRAQDVSFIDHKLNKLLKKEYVHIDTIIELFKSKYDISETRYFIEKIVWPQFLRTIKTNYHSAAGNQFNNVCFDDTSWPCVQLFKIHQGTRRNFSCIQHDHRDGRENVQFFLDFRPESATTIWTTLWSRCFSRKCKSNAKNVHVSHKLTIQQ.

Residues 919–958 (CIQHDHRDGRENVQFFLDFRPESATTIWTTLWSRCFSRKC) form a CHC2-type zinc finger.

The protein belongs to the herpesviridae DNA primase family. Associates with the helicase and the primase-associated factor to form the helicase-primase factor.

It localises to the host nucleus. Functionally, essential component of the helicase/primase complex. Unwinds the DNA at the replication forks and generates single-stranded DNA for both leading and lagging strand synthesis. The primase initiates primer synthesis and thereby produces large amount of short RNA primers on the lagging strand that the polymerase elongates using dNTPs. This is DNA primase from Elephas maximus (Indian elephant).